Here is an 863-residue protein sequence, read N- to C-terminus: Glycogen phosphorylase (863 aa).

Lysine 618 carries the post-translational modification N6-(pyridoxal phosphate)lysine.

The protein belongs to the glycogen phosphorylase family. Requires pyridoxal 5'-phosphate as cofactor.

The enzyme catalyses [(1-&gt;4)-alpha-D-glucosyl](n) + phosphate = [(1-&gt;4)-alpha-D-glucosyl](n-1) + alpha-D-glucose 1-phosphate. Its function is as follows. Phosphorylase is an important allosteric enzyme in carbohydrate metabolism. Enzymes from different sources differ in their regulatory mechanisms and in their natural substrates. However, all known phosphorylases share catalytic and structural properties. The sequence is that of Glycogen phosphorylase (glgP) from Mycobacterium tuberculosis (strain CDC 1551 / Oshkosh).